Consider the following 959-residue polypeptide: Transcription factor 1 (959 aa).

2 C2H2-type zinc fingers span residues V2–H24 and F30–H52. Positions C79 to C105 form a DNA-binding region, zn(2)-C6 fungal-type. The tract at residues P154 to Q226 is disordered. A compositionally biased stretch (low complexity) spans K163–S178.

Its subcellular location is the nucleus. In terms of biological role, elsinochromes biosynthesis cluster-specific transcription factor that positively regulates the expression of cluster genes including RDT1, PKS1, PRF1 and HP1, and subsequent elsinochromes production. The polypeptide is Transcription factor 1 (Elsinoe fawcettii (Citrus scab fungus)).